The primary structure comprises 142 residues: Large ribosomal subunit protein uL13 (142 aa).

This sequence belongs to the universal ribosomal protein uL13 family. In terms of assembly, part of the 50S ribosomal subunit.

This protein is one of the early assembly proteins of the 50S ribosomal subunit, although it is not seen to bind rRNA by itself. It is important during the early stages of 50S assembly. The chain is Large ribosomal subunit protein uL13 from Ralstonia nicotianae (strain ATCC BAA-1114 / GMI1000) (Ralstonia solanacearum).